The following is a 365-amino-acid chain: Flagellin 1 (365 aa).

The protein belongs to the bacterial flagellin family.

The protein localises to the secreted. Its subcellular location is the bacterial flagellum. In terms of biological role, flagellin is the subunit protein which polymerizes to form the filaments of bacterial flagella. This chain is Flagellin 1 (fliC1), found in Proteus mirabilis.